The primary structure comprises 738 residues: MKEAKVENIDFGNALSERYLAYALSTIMSRSLPDVRDGLKPVHRRLLYAMLQLRLEPNSGYKKCARVVGDVIGKYHPHGDVAVYDTLVRLAQHFSLRYPLIDGQGNFGSIDGDNAAAMRYTESRMTDICTLLMEDIDKDTVDFRPTYDGSDLEPVIMPASFPNLLANGSEGIAVGMATNIPPHNLHELCDALIHLINHPKAEINDIINFVKGPDFPTGGIIIDKAEVINAAYTTGRGSLRVRSRWEKEELSYGTYQIVVTEIPYQVQKSKLIEQIAILLKDKKIPLVSNIRDESTDIIRLVIEPRDRGCDPQIVMESLFKLTNLESRIQLNMNVIGSNNVPRVMNILEILQEFLYHRQNIVTRRSTYLLNKIKHRLEILKGLRIAYLNLDEIIKIIREEDEPKAIMMEWFKLTEIQVEAILNTRLRSLRKLEEQEIINEHSNLQKQQAILEEILNNPKELWKIVKKEIKTVQTKFGLNTVIGARRTSFEEVTLTNQVVDITAFITKEPITIICSKMGWVRSLKGHNTDLSTIKYKEGDAEKFILEAYTTDKILIVSSEGRFFTLLADNISKGKGTGESIKLLVDIGNNDITNILVYKPDQLLLLASSVGKGFLVNSNEVMAQTKTGKQIMNVPDGHVCIACLPVNGDSIACIGESRKLLVFNIDEIPEMKKGQGVTLQKFKNAKLLDIKIFNKEDGLGWNNNGKVKLEKNIVAFLGKRGSTGKLPPMGFPKNNRFSSY.

One can recognise a Topo IIA-type catalytic domain in the interval 32-496; that stretch reads LPDVRDGLKP…SFEEVTLTNQ (465 aa). Tyr-120 (O-(5'-phospho-DNA)-tyrosine intermediate) is an active-site residue.

Belongs to the type II topoisomerase GyrA/ParC subunit family. ParC type 1 subfamily. In terms of assembly, heterotetramer composed of ParC and ParE.

The protein resides in the cell membrane. The catalysed reaction is ATP-dependent breakage, passage and rejoining of double-stranded DNA.. Topoisomerase IV is essential for chromosome segregation. It relaxes supercoiled DNA. Performs the decatenation events required during the replication of a circular DNA molecule. This is DNA topoisomerase 4 subunit A from Rickettsia conorii (strain ATCC VR-613 / Malish 7).